A 2507-amino-acid chain; its full sequence is Putative neurobeachin homolog (2507 aa).

3 disordered regions span residues 1 to 109, 1307 to 1377, and 1629 to 1649; these read MEIS…PPLP, PSSP…DGGR, and SRHEEANLPEGEKNEEPEISE. Acidic residues predominate over residues 24 to 37; it reads PVEEGEEVNDEESN. Over residues 1317–1340 the composition is skewed to polar residues; sequence TTQKQENSENVNSETSPENGSNGK. Positions 1360 to 1372 are enriched in acidic residues; it reads DGEEEENGEEGQG. The BEACH-type PH domain maps to 1690-1798; it reads PSSQSACFST…AVKKVVYQLP (109 aa). One can recognise a BEACH domain in the interval 1817–2106; it reads MTPRQLFKHS…QLLTEAHPPR (290 aa). WD repeat units lie at residues 2265-2308, 2326-2365, 2405-2444, and 2447-2486; these read GHGD…GFIA, GHEASISALCVSAEHGLVVSGCEDGVILIHTTSSDLLRRI, LVDDKIECVTVTRDGEFAVTGAVNGRINIWRMFPLTKLYT, and PLNSAVRSVAVVASHRFILGGLDSGAIVVFNADFNRWHYE.

The protein belongs to the WD repeat neurobeachin family. Interacts with RII subunit of PKA. Expressed in vulval precursor cells and rectal epithelia in L2 and L3 larvae. In L4 larvae, expression is seen in intestinal epithelial cells.

It is found in the cytoplasm. The protein resides in the membrane. Its subcellular location is the nucleus. Functionally, binds to type II regulatory subunits of protein kinase A and anchors/targets them to the membrane. May anchor the kinase to cytoskeletal and/or organelle-associated proteins. Regulates endosomal traffic in polarized epithelial cells such as the vulval precursor cells and intestinal cells. Thought to act as a negative regulator of lin-12 activity in vulval precursor cells. May have a role in the internalization process from basolateral surface of polarized epithelial cells. This Caenorhabditis elegans protein is Putative neurobeachin homolog (sel-2).